The sequence spans 504 residues: Maturase K (504 aa).

This sequence belongs to the intron maturase 2 family. MatK subfamily.

It localises to the plastid. Its subcellular location is the chloroplast. Usually encoded in the trnK tRNA gene intron. Probably assists in splicing its own and other chloroplast group II introns. The sequence is that of Maturase K from Fagus hayatae (Formosan elm).